A 37-amino-acid polypeptide reads, in one-letter code: DMKIGVSMSQFDDTHLTYLQQSMDEKAKSYPDGVVLL.

It belongs to the bacterial solute-binding protein 2 family.

The protein resides in the periplasm. This Pseudomonas sp protein is Myo-inositol-binding protein.